Here is a 186-residue protein sequence, read N- to C-terminus: MKTAHEVRPGNVIMFEGSPWVVQKTETTRSGRNAAIVKLKLKNLLLNSGTETTFKGEDKIDDIILDRLDCTYSYFADPMYVFMDAEYNQYDVEAENLGDAAAYIVDGMEETCQVTFYDGKAISVEMPTTIVREVIYTEPSARGDTSGKVMKPATITGGGTISVADFVKVGDKIEIDTRTGEFKKRV.

N-alpha-linked (Rha) arginine glycosylation occurs at R32.

This sequence belongs to the elongation factor P family. In terms of processing, glycosylated ar Arg-32 by EarP: arginine rhamnosylation is required for EF-P function and rescue of polyproline stalled ribosomes.

The protein resides in the cytoplasm. The protein operates within protein biosynthesis; polypeptide chain elongation. Involved in peptide bond synthesis. Stimulates efficient translation and peptide-bond synthesis on native or reconstituted 70S ribosomes in vitro. Probably functions indirectly by altering the affinity of the ribosome for aminoacyl-tRNA, thus increasing their reactivity as acceptors for peptidyl transferase. The sequence is that of Elongation factor P from Shewanella oneidensis (strain ATCC 700550 / JCM 31522 / CIP 106686 / LMG 19005 / NCIMB 14063 / MR-1).